We begin with the raw amino-acid sequence, 175 residues long: MDIFKEISDAIQEGLNSIFERWDLVLWQIAATVILIIVVRIFLWKPITRYLEQRQEALSKELHEAAHERERVAQIRYELQTEYEVMRKEARQMKDTLMSEAQLEKERIISDARNEAKRRIQQVDRDVQQELRLQSEKIRENIKNIAFDVAEKIVSHQVTDENIDEVIDEMLDEKL.

Residues 24–44 form a helical membrane-spanning segment; that stretch reads LVLWQIAATVILIIVVRIFLW.

Belongs to the ATPase B chain family. In terms of assembly, F-type ATPases have 2 components, F(1) - the catalytic core - and F(0) - the membrane proton channel. F(1) has five subunits: alpha(3), beta(3), gamma(1), delta(1), epsilon(1). F(0) has three main subunits: a(1), b(2) and c(10-14). The alpha and beta chains form an alternating ring which encloses part of the gamma chain. F(1) is attached to F(0) by a central stalk formed by the gamma and epsilon chains, while a peripheral stalk is formed by the delta and b chains.

The protein resides in the cell membrane. In terms of biological role, f(1)F(0) ATP synthase produces ATP from ADP in the presence of a proton or sodium gradient. F-type ATPases consist of two structural domains, F(1) containing the extramembraneous catalytic core and F(0) containing the membrane proton channel, linked together by a central stalk and a peripheral stalk. During catalysis, ATP synthesis in the catalytic domain of F(1) is coupled via a rotary mechanism of the central stalk subunits to proton translocation. Functionally, component of the F(0) channel, it forms part of the peripheral stalk, linking F(1) to F(0). This is ATP synthase subunit b from Acholeplasma laidlawii (strain PG-8A).